Consider the following 349-residue polypeptide: tRNA pseudouridine synthase D (349 aa).

Residue Phe-26 coordinates substrate. The active-site Nucleophile is the Asp-79. Asn-128 contacts substrate. The TRUD domain maps to 154–302 (GVPNYFGSQR…VEGSRRAVLL (149 aa)). Phe-328 is a binding site for substrate.

The protein belongs to the pseudouridine synthase TruD family.

It catalyses the reaction uridine(13) in tRNA = pseudouridine(13) in tRNA. Responsible for synthesis of pseudouridine from uracil-13 in transfer RNAs. In Yersinia pseudotuberculosis serotype IB (strain PB1/+), this protein is tRNA pseudouridine synthase D.